An 880-amino-acid polypeptide reads, in one-letter code: Translation initiation factor IF-2 (880 aa).

3 disordered regions span residues 51 to 78 (KQHGGESKTKMTLQRKTKSTLNVKGSTG), 93 to 116 (YVKRSDSETQETQAAELADQQAAN), and 142 to 293 (KEAD…FEKP). Polar residues predominate over residues 69 to 78 (STLNVKGSTG). The segment covering 142–229 (KEADEKAKKA…ARKKAAEGGD (88 aa)) has biased composition (basic and acidic residues). Basic residues predominate over residues 269-279 (GRRTRRGKKQR). The 170-residue stretch at 380–549 (SRAPVVTIMG…LLQAEMLDLS (170 aa)) folds into the tr-type G domain. A G1 region spans residues 389 to 396 (GHVDHGKT). 389 to 396 (GHVDHGKT) lines the GTP pocket. The segment at 414 to 418 (GITQH) is G2. The tract at residues 435–438 (DTPG) is G3. GTP contacts are provided by residues 435–439 (DTPGH) and 489–492 (NKID). A G4 region spans residues 489-492 (NKID). The interval 525–527 (SAK) is G5.

The protein belongs to the TRAFAC class translation factor GTPase superfamily. Classic translation factor GTPase family. IF-2 subfamily.

The protein localises to the cytoplasm. In terms of biological role, one of the essential components for the initiation of protein synthesis. Protects formylmethionyl-tRNA from spontaneous hydrolysis and promotes its binding to the 30S ribosomal subunits. Also involved in the hydrolysis of GTP during the formation of the 70S ribosomal complex. This is Translation initiation factor IF-2 from Psychromonas ingrahamii (strain DSM 17664 / CCUG 51855 / 37).